The chain runs to 530 residues: BTB/POZ domain-containing protein 3 (530 aa).

Residues 23 to 48 (KNRSKKGSKKANSSGGGGGGGSVGSG) form a disordered region. The segment covering 36 to 46 (SGGGGGGGSVG) has biased composition (gly residues). Positions 128-198 (ADVHFVVGPP…IYCDEIDLAA (71 aa)) constitute a BTB domain. The BACK domain maps to 243-308 (FEEPDLTQRC…NWAEVECQRQ (66 aa)).

In terms of tissue distribution, in the somatosensory cortex, specifically expressed in spiny stellate neurons during barrel formation. Also expressed in the olfactory bulb, piriform cortex and hippocampus.

It localises to the cytoplasm. Its subcellular location is the cytosol. It is found in the nucleus. Functionally, acts as a key regulator of dendritic field orientation during development of sensory cortex. Also directs dendrites toward active axon terminals when ectopically expressed. This chain is BTB/POZ domain-containing protein 3 (Btbd3), found in Mus musculus (Mouse).